Reading from the N-terminus, the 295-residue chain is UDP-N-acetylenolpyruvoylglucosamine reductase (295 aa).

The FAD-binding PCMH-type domain maps to 23–188 (KVGGPADFLA…ISAKFALKPG (166 aa)). R167 is a catalytic residue. The active-site Proton donor is S217. E287 is an active-site residue.

It belongs to the MurB family. It depends on FAD as a cofactor.

Its subcellular location is the cytoplasm. It catalyses the reaction UDP-N-acetyl-alpha-D-muramate + NADP(+) = UDP-N-acetyl-3-O-(1-carboxyvinyl)-alpha-D-glucosamine + NADPH + H(+). It functions in the pathway cell wall biogenesis; peptidoglycan biosynthesis. Its function is as follows. Cell wall formation. The sequence is that of UDP-N-acetylenolpyruvoylglucosamine reductase from Streptococcus pyogenes serotype M1.